Reading from the N-terminus, the 224-residue chain is A-type ATP synthase subunit D (224 aa).

Basic and acidic residues predominate over residues Lys-200–Gln-209. The interval Lys-200–Ala-224 is disordered. Low complexity predominate over residues Glu-215–Ala-224.

It belongs to the V-ATPase D subunit family. In terms of assembly, has multiple subunits with at least A(3), B(3), C, D, E, F, H, I and proteolipid K(x).

It localises to the cell membrane. In terms of biological role, component of the A-type ATP synthase that produces ATP from ADP in the presence of a proton gradient across the membrane. In Halobacterium salinarum (strain ATCC 29341 / DSM 671 / R1), this protein is A-type ATP synthase subunit D.